A 326-amino-acid chain; its full sequence is MDKAPEQPFSGKLPDVQATSPDVRINLTRVGVKNVKKLVEVTRPDKRPVVFISNFDVYVDLPGSLKGANLSRNFEVIDEVLQQAIDGEVNEIENLCSAVARKLLDRHEYADRTEVLMRSEFMVKRETPVSHTTCHEVVKVHARAIAKRTFRDPIVRKSIGAEVTGMTACPCAQNIMKERANHVLEGLGIDQKTIDAFFAEVPMATHNQRGRGFLCIETDDDQHVDLEKIIRILKESMSAGIYELLKRGDESAVVLAAHKNPRFVEDCVREMAKKVLSGFDYLPGDAVVTIKQTNEESIHQHDAYAERRATLAELQDELNGDHKTSC.

The protein belongs to the GTP cyclohydrolase IV family. In terms of assembly, homodimer. Fe(2+) serves as cofactor.

It carries out the reaction GTP + H2O = 7,8-dihydroneopterin 2',3'-cyclic phosphate + formate + diphosphate + H(+). It functions in the pathway cofactor biosynthesis; 5,6,7,8-tetrahydromethanopterin biosynthesis. Converts GTP to 7,8-dihydro-D-neopterin 2',3'-cyclic phosphate, the first intermediate in the biosynthesis of coenzyme methanopterin. The sequence is that of GTP cyclohydrolase MptA from Methanoregula boonei (strain DSM 21154 / JCM 14090 / 6A8).